A 147-amino-acid chain; its full sequence is Lysozyme C (147 aa).

A signal peptide spans 1 to 18; that stretch reads MKALVILGFLFLSVAVQG. In terms of domain architecture, C-type lysozyme spans 19 to 147; it reads KVFERCELAR…VSSYVEGCTL (129 aa). 4 disulfides stabilise this stretch: Cys24-Cys145, Cys48-Cys133, Cys83-Cys99, and Cys95-Cys113. Residues Glu53 and Asp71 contribute to the active site.

Belongs to the glycosyl hydrolase 22 family. In terms of assembly, monomer. In terms of tissue distribution, stomach-specific.

It carries out the reaction Hydrolysis of (1-&gt;4)-beta-linkages between N-acetylmuramic acid and N-acetyl-D-glucosamine residues in a peptidoglycan and between N-acetyl-D-glucosamine residues in chitodextrins.. Its function is as follows. Lysozymes have primarily a bacteriolytic function; those in tissues and body fluids are associated with the monocyte-macrophage system and enhance the activity of immunoagents. In Bos taurus (Bovine), this protein is Lysozyme C (LYZ1).